The sequence spans 343 residues: Tetraacyldisaccharide 4'-kinase (343 aa).

Residue 55–62 participates in ATP binding; that stretch reads TVGGEGKT.

It belongs to the LpxK family.

It catalyses the reaction a lipid A disaccharide + ATP = a lipid IVA + ADP + H(+). Its pathway is glycolipid biosynthesis; lipid IV(A) biosynthesis; lipid IV(A) from (3R)-3-hydroxytetradecanoyl-[acyl-carrier-protein] and UDP-N-acetyl-alpha-D-glucosamine: step 6/6. Transfers the gamma-phosphate of ATP to the 4'-position of a tetraacyldisaccharide 1-phosphate intermediate (termed DS-1-P) to form tetraacyldisaccharide 1,4'-bis-phosphate (lipid IVA). This is Tetraacyldisaccharide 4'-kinase from Chelativorans sp. (strain BNC1).